We begin with the raw amino-acid sequence, 337 residues long: m7GpppX diphosphatase (337 aa).

The disordered stretch occupies residues 1 to 35; the sequence is MADAAPQLGKRKRELDVEEAHAASTEEKEAGVGNG. At A2 the chain carries N-acetylalanine. Residues 10-13 carry the nuclear localization signal (NLS) motif; it reads KRKR. Over residues 13–30 the composition is skewed to basic and acidic residues; the sequence is RELDVEEAHAASTEEKEA. S24 and S101 each carry phosphoserine. An N6-acetyllysine mark is found at K138 and K142. Positions 142–154 match the nuclear export sequence (NES) motif; sequence KYLRQDLRLIRET. Substrate contacts are provided by residues W175, E185, D205, K207, and 268–279; that span reads HYLPSYYHLHVH. The short motif at 275 to 279 is the Histidine triad motif element; sequence HLHVH. The active-site Nucleophile is H277.

Belongs to the HIT family. In terms of assembly, homodimer. Associates with components of the exosome multienzyme ribonuclease complex, such as EXOSC3 and EXOSC4. Interacts with NDOR1. As to expression, detected in liver, brain, kidney, testis and prostate.

The protein resides in the cytoplasm. It localises to the nucleus. It carries out the reaction a 5'-end (N(7)-methyl 5'-triphosphoguanosine)-ribonucleoside in mRNA + H2O = N(7)-methyl-GMP + a 5'-end diphospho-ribonucleoside in mRNA + 2 H(+). The hydrolytic product 7-methylguanosine diphosphate (m7GDP) efficiently inhibits the decapping scavenger activity and acts as a competitive inhibitor in vitro. Inhibited by 2,4-diaminoquinazoline. In terms of biological role, decapping scavenger enzyme that catalyzes the cleavage of a residual cap structure following the degradation of mRNAs by the 3'-&gt;5' exosome-mediated mRNA decay pathway. Hydrolyzes cap analog structures like 7-methylguanosine nucleoside triphosphate (m7GpppG) with up to 10 nucleotide substrates (small capped oligoribonucleotides) and specifically releases 5'-phosphorylated RNA fragments and 7-methylguanosine monophosphate (m7GMP). Cleaves cap analog structures like tri-methyl guanosine nucleoside triphosphate (m3(2,2,7)GpppG) with very poor efficiency. Does not hydrolyze unmethylated cap analog (GpppG) and shows no decapping activity on intact m7GpppG-capped mRNA molecules longer than 25 nucleotides. Does not hydrolyze 7-methylguanosine diphosphate (m7GDP) to m7GMP. May also play a role in the 5'-&gt;3 mRNA decay pathway; m7GDP, the downstream product released by the 5'-&gt;3' mRNA mediated decapping activity, may be also converted by DCPS to m7GMP. Binds to m7GpppG and strongly to m7GDP. Plays a role in first intron splicing of pre-mRNAs. Inhibits activation-induced cell death. The polypeptide is m7GpppX diphosphatase (DCPS) (Homo sapiens (Human)).